We begin with the raw amino-acid sequence, 497 residues long: ATP-dependent RNA helicase CshA (497 aa).

The short motif at 1 to 29 (MKFSELGLSDSLLKAIKRSGYEEATPIQE) is the Q motif element. A Helicase ATP-binding domain is found at 32–202 (IPMVLEGKDV…VQFMSDPETV (171 aa)). An ATP-binding site is contributed by 45-52 (AQTGTGKT). The DEAD box signature appears at 150–153 (DEAD). The Helicase C-terminal domain occupies 228-373 (DIMTRLIDVQ…PLKPPTAEEA (146 aa)). Residues 425-497 (AASEVPVKIT…SFNIRHRKEN (73 aa)) form a disordered region. The span at 448–458 (RNGNRNNSHGG) shows a compositional bias: low complexity. Composition is skewed to basic residues over residues 459–473 (NHYR…QHGS) and 481–497 (KSHS…RKEN).

The protein belongs to the DEAD box helicase family. CshA subfamily. In terms of assembly, oligomerizes, may be a member of the RNA degradosome.

Its subcellular location is the cytoplasm. The protein localises to the cell membrane. It catalyses the reaction ATP + H2O = ADP + phosphate + H(+). In terms of biological role, DEAD-box RNA helicase possibly involved in RNA degradation. Unwinds dsRNA in both 5'- and 3'-directions, has RNA-dependent ATPase activity. Over-expression leads to cell aggregation. The chain is ATP-dependent RNA helicase CshA from Limosilactobacillus reuteri (Lactobacillus reuteri).